Reading from the N-terminus, the 89-residue chain is MTEAKKSLKRTLIGKVVSDKRAKTVTVMVERRVKHPIYDKIMIKSSKYHAHDEQGEYKLGDVVEITESRPLSKTKNWVATRLVQKAALV.

This sequence belongs to the universal ribosomal protein uS17 family. In terms of assembly, part of the 30S ribosomal subunit.

Its function is as follows. One of the primary rRNA binding proteins, it binds specifically to the 5'-end of 16S ribosomal RNA. This is Small ribosomal subunit protein uS17 from Delftia acidovorans (strain DSM 14801 / SPH-1).